The following is a 147-amino-acid chain: Ubiquitin-conjugating enzyme E2 D4 (147 aa).

Residues 1–147 (MALKRIQKEL…AREWTQKYAM (147 aa)) form the UBC core domain. The active-site Glycyl thioester intermediate is C85.

This sequence belongs to the ubiquitin-conjugating enzyme family. As to quaternary structure, interacts with map3k10/mlk2. In terms of tissue distribution, at embryonic stages 28 to 35, expressed in the somites, eye primordia, otic vesicle and branchial arches. By stage 35, also weakly expressed in the pronephros.

It carries out the reaction S-ubiquitinyl-[E1 ubiquitin-activating enzyme]-L-cysteine + [E2 ubiquitin-conjugating enzyme]-L-cysteine = [E1 ubiquitin-activating enzyme]-L-cysteine + S-ubiquitinyl-[E2 ubiquitin-conjugating enzyme]-L-cysteine.. It participates in protein modification; protein ubiquitination. Its function is as follows. Catalyzes the covalent attachment of ubiquitin to other proteins. Regulates pronephros development, possibly by promoting ubiquitination and thus inactivation or degradation of map3k10/mlk2. This chain is Ubiquitin-conjugating enzyme E2 D4 (ube2d4), found in Xenopus laevis (African clawed frog).